A 161-amino-acid polypeptide reads, in one-letter code: Cyclic pyranopterin monophosphate synthase (161 aa).

Substrate contacts are provided by residues 75–77 (LCH) and 113–114 (ME). D128 is an active-site residue.

Belongs to the MoaC family. In terms of assembly, homohexamer; trimer of dimers.

The enzyme catalyses (8S)-3',8-cyclo-7,8-dihydroguanosine 5'-triphosphate = cyclic pyranopterin phosphate + diphosphate. The protein operates within cofactor biosynthesis; molybdopterin biosynthesis. Catalyzes the conversion of (8S)-3',8-cyclo-7,8-dihydroguanosine 5'-triphosphate to cyclic pyranopterin monophosphate (cPMP). This chain is Cyclic pyranopterin monophosphate synthase, found in Salmonella heidelberg (strain SL476).